Reading from the N-terminus, the 274-residue chain is Protein RecA (274 aa).

43–50 serves as a coordination point for ATP; the sequence is GPESSGKT.

This sequence belongs to the RecA family.

It localises to the cytoplasm. Its function is as follows. Can catalyze the hydrolysis of ATP in the presence of single-stranded DNA, the ATP-dependent uptake of single-stranded DNA by duplex DNA, and the ATP-dependent hybridization of homologous single-stranded DNAs. It interacts with LexA causing its activation and leading to its autocatalytic cleavage. In Neisseria flavescens, this protein is Protein RecA.